The sequence spans 268 residues: MVKVGKLVEEQKAAMEEEKEVNAEAAEELEEAEEASCNGSKKKVVPGIVYLGHVPPRFRPLHVRNLLSVYGEVGRVFFQAEDPFVRRKKKAAAAAGGKKGAKYSKDYTEGWVEFRDKRIAKRVAASLHNTPMGARKRSPFRYDLWNLKYLHRFTWSHLSEHLAFERQVRRQRLRAEVAQAKRETDFYLRNVEQGQRFLAADGDATRPNSSWTFTQRPTEQELRAQKGARPGGRERARLATVQDQARSNRGLLARIFGASLLAESRKEP.

A coiled-coil region spans residues 6–38; sequence KLVEEQKAAMEEEKEVNAEAAEELEEAEEASCN. The region spanning 47–144 is the RRM domain; sequence GIVYLGHVPP…RKRSPFRYDL (98 aa). The stretch at 163 to 193 forms a coiled coil; that stretch reads AFERQVRRQRLRAEVAQAKRETDFYLRNVEQ. The disordered stretch occupies residues 200 to 242; that stretch reads ADGDATRPNSSWTFTQRPTEQELRAQKGARPGGRERARLATVQ. Residues 206-217 show a composition bias toward polar residues; it reads RPNSSWTFTQRP.

The protein belongs to the ESF2/ABP1 family. As to quaternary structure, interacts with IGHMBP2. Interacts with ESF1/ABTAP.

The protein localises to the nucleus. The protein resides in the nucleolus. In terms of biological role, may be a novel TATA-binding protein (TBP) which can function as a basal transcription activator. Can act as a regulator of basal transcription for class II genes. This Rattus norvegicus (Rat) protein is Activator of basal transcription 1 (Abt1).